Here is a 134-residue protein sequence, read N- to C-terminus: Small ribosomal subunit protein uS8c (134 aa).

Belongs to the universal ribosomal protein uS8 family. As to quaternary structure, part of the 30S ribosomal subunit.

Its subcellular location is the plastid. It is found in the chloroplast. One of the primary rRNA binding proteins, it binds directly to 16S rRNA central domain where it helps coordinate assembly of the platform of the 30S subunit. The chain is Small ribosomal subunit protein uS8c (rps8) from Aethionema grandiflorum (Persian stone-cress).